A 601-amino-acid polypeptide reads, in one-letter code: Elongation factor 4 (601 aa).

The region spanning 2 to 184 (DLIRNFSIIA…EMIARVPPPT (183 aa)) is the tr-type G domain. GTP contacts are provided by residues 14-19 (DHGKST) and 131-134 (NKID).

The protein belongs to the TRAFAC class translation factor GTPase superfamily. Classic translation factor GTPase family. LepA subfamily.

It is found in the cell inner membrane. The enzyme catalyses GTP + H2O = GDP + phosphate + H(+). Functionally, required for accurate and efficient protein synthesis under certain stress conditions. May act as a fidelity factor of the translation reaction, by catalyzing a one-codon backward translocation of tRNAs on improperly translocated ribosomes. Back-translocation proceeds from a post-translocation (POST) complex to a pre-translocation (PRE) complex, thus giving elongation factor G a second chance to translocate the tRNAs correctly. Binds to ribosomes in a GTP-dependent manner. The protein is Elongation factor 4 of Polynucleobacter necessarius subsp. necessarius (strain STIR1).